The following is a 506-amino-acid chain: (+)-vincadifformine 19-hydroxylase (506 aa).

Topologically, residues 1–4 (MELD) are lumenal. A helical membrane pass occupies residues 5–25 (ECSPSIFIISFIFIAISIAIL). The Cytoplasmic portion of the chain corresponds to 26 to 506 (RRIRPKKTKA…DLHLIPTSYM (481 aa)). Cys-450 is a heme binding site.

It belongs to the cytochrome P450 family. It depends on heme as a cofactor. Accumulates progressively in roots.

The protein localises to the endoplasmic reticulum membrane. The enzyme catalyses (+)-vincadifformine + reduced [NADPH--hemoprotein reductase] + O2 = (+)-minovincinine + oxidized [NADPH--hemoprotein reductase] + H2O + H(+). It functions in the pathway alkaloid biosynthesis. The enantiomer (-)-vincadifformine acts as a competitive inhibitor. Component of the monoterpenoid indole alkaloids (MIAs, e.g. echitovenine, tabersonine, lochnericine, 19-hydroxytabersonine and horhammericine) biosynthetic pathway; MIAs are used in cancer treatment and other medical applications. Cytochrome P450 catalyzing the hydroxylation of (+)-vincadifformine to (+)-minovincinine. The polypeptide is (+)-vincadifformine 19-hydroxylase (Catharanthus roseus (Madagascar periwinkle)).